The sequence spans 170 residues: Protein BofC (170 aa).

The first 30 residues, 1–30 (MKRFSTAYLLLGILCSAAVFLIGAPSRALG), serve as a signal peptide directing secretion.

In terms of assembly, monomer.

It localises to the forespore intermembrane space. Functionally, inhibits the SpoIVB zymogen from undergoing autocatalytic activation by an unknown mechanism, and in this way plays a role in the sigma-K checkpoint of sporulation. The protein is Protein BofC (bofC) of Bacillus subtilis (strain 168).